The chain runs to 463 residues: Succinate--CoA ligase [ADP-forming] subunit beta, mitochondrial (463 aa).

The transit peptide at 1–53 (MAASVFYGRLLAVATLRNHRPRTALGAAAQVLGSSGLFNNHGLQVQQQQQRNL) directs the protein to the mitochondrion. One can recognise an ATP-grasp domain in the interval 61–288 (MELLQEAGVS…SNSAYRQKKI (228 aa)). Lysine 78 is subject to N6-acetyllysine. Tyrosine 84 carries the post-translational modification Phosphotyrosine. Residue lysine 88 is modified to N6-acetyllysine; alternate. Residue lysine 88 is modified to N6-succinyllysine; alternate. Residues lysine 98 and 105–107 (GRG) each bind ATP. N6-acetyllysine is present on residues lysine 129, lysine 139, lysine 143, and lysine 216. Mg(2+)-binding residues include asparagine 258 and aspartate 272. Serine 279 is subject to Phosphoserine. Asparagine 323 contributes to the substrate binding site. Threonine 341 bears the Phosphothreonine mark. Lysine 368 is modified (N6-acetyllysine). 380-382 (GIM) is a binding site for substrate.

Belongs to the succinate/malate CoA ligase beta subunit family. ATP-specific subunit beta subfamily. Heterodimer of an alpha and a beta subunit. The beta subunit determines specificity for ATP. Interacts with ALAS2. Mg(2+) serves as cofactor.

Its subcellular location is the mitochondrion. The catalysed reaction is succinate + ATP + CoA = succinyl-CoA + ADP + phosphate. It functions in the pathway carbohydrate metabolism; tricarboxylic acid cycle; succinate from succinyl-CoA (ligase route): step 1/1. Its function is as follows. ATP-specific succinyl-CoA synthetase functions in the citric acid cycle (TCA), coupling the hydrolysis of succinyl-CoA to the synthesis of ATP and thus represents the only step of substrate-level phosphorylation in the TCA. The beta subunit provides nucleotide specificity of the enzyme and binds the substrate succinate, while the binding sites for coenzyme A and phosphate are found in the alpha subunit. In Macaca fascicularis (Crab-eating macaque), this protein is Succinate--CoA ligase [ADP-forming] subunit beta, mitochondrial.